A 298-amino-acid chain; its full sequence is uncharacterized protein (298 aa).

10 helical membrane passes run 9–28, 38–60, 72–94, 104–121, 128–145, 150–167, 174–196, 211–233, 240–262, and 272–291; these read GYVL…LYFK, IIVQ…WKHP, RFVV…VWAV, LGYY…MLLL, LQWL…QQVW, LPWV…YGLI, AALP…WLLF, PEAL…FNAA, ATLG…LLFG, and AFAF…WRSL. The 124-residue stretch at 18–141 folds into the EamA domain; it reads VIWGLFPLYF…AVALASLGVA (124 aa).

It belongs to the EamA transporter family.

Its subcellular location is the cell membrane. This is an uncharacterized protein from Pseudomonas aeruginosa (strain ATCC 15692 / DSM 22644 / CIP 104116 / JCM 14847 / LMG 12228 / 1C / PRS 101 / PAO1).